The primary structure comprises 929 residues: Chitin synthase 1 (929 aa).

The span at 1 to 12 (MAYRGAGGPGGG) shows a compositional bias: gly residues. Disordered stretches follow at residues 1–43 (MAYR…QEDE) and 114–156 (MGGH…GGGL). Polar residues-rich tracts occupy residues 21-33 (QDLN…SNVQ) and 140-149 (SWVQRQNPNA). The N-linked (GlcNAc...) asparagine glycan is linked to asparagine 560. Transmembrane regions (helical) follow at residues 587 to 607 (FFFH…WFSL), 643 to 663 (LFNA…FILA), 678 to 698 (SFFV…YLVV), 730 to 750 (VILL…FMYL), and 758 to 778 (SFPY…VYAF). Asparagine 801 carries an N-linked (GlcNAc...) asparagine glycan. A run of 2 helical transmembrane segments spans residues 857–877 (TMLV…ITSD) and 897–917 (FLLF…LWFL).

The protein belongs to the chitin synthase family. Class III subfamily.

It localises to the cell membrane. It catalyses the reaction [(1-&gt;4)-N-acetyl-beta-D-glucosaminyl](n) + UDP-N-acetyl-alpha-D-glucosamine = [(1-&gt;4)-N-acetyl-beta-D-glucosaminyl](n+1) + UDP + H(+). In terms of biological role, polymerizes chitin, a structural polymer of the cell wall and septum, by transferring the sugar moiety of UDP-GlcNAc to the non-reducing end of the growing chitin polymer. CHS1 and CHS3 have compensatory functions in cell wall modifications in responses to stresses. Involved in appressoria formation and required for full virulence. The protein is Chitin synthase 1 of Pyricularia oryzae (strain 70-15 / ATCC MYA-4617 / FGSC 8958) (Rice blast fungus).